A 406-amino-acid chain; its full sequence is MDGWRRMPRWGLLLLLWGSCTFGLPTDTTTFKRIFLKRMPSIRESLKERGVDMARLGPEWSQPMKRLALGNTTSSVILTNYMDTQYYGEIGIGTPPQTFKVVFDTGSSNVWVPSSKCSRLYTACVYHKLFDASDSSSYKHNGTELTLRYSTGTVSGFLSQDIITVGGITVTQMFGEVTEMPALPFMLAEFDGVVGMGFIEQAIGRVTPIFDNILSQGVLKEDVFSFYYNRDSENAQSLGGQIVLGGSDPQHYEGNFHYINLIKTGVWQIQMKGVSVGSSTLLCEDGCLALVDTGASYISGSTSSIEKLMEALGAKKRLFDYVVKCNEGPTLPDISFHLGGKEYTLTSADYVFQESYSSKKLCTLAIHAMDIPPPTGPTWALGATFIRKFYTEFDRRNNRIGFALAR.

Residues 1–23 (MDGWRRMPRWGLLLLLWGSCTFG) form the signal peptide. A propeptide spans 24-66 (LPTDTTTFKRIFLKRMPSIRESLKERGVDMARLGPEWSQPMKR) (activation peptide). N-linked (GlcNAc...) asparagine glycosylation is present at Asn-71. The region spanning 86-403 (YYGEIGIGTP…DRRNNRIGFA (318 aa)) is the Peptidase A1 domain. The active site involves Asp-104. Cysteines 117 and 124 form a disulfide. N-linked (GlcNAc...) asparagine glycosylation occurs at Asn-141. Residues Cys-283 and Cys-287 are joined by a disulfide bond. Asp-292 is an active-site residue. Cysteines 325 and 362 form a disulfide.

It belongs to the peptidase A1 family. Interacts with ATP6AP2.

It is found in the secreted. The protein localises to the membrane. The catalysed reaction is Cleavage of Leu-|-Xaa bond in angiotensinogen to generate angiotensin I.. Interaction with ATP6AP2 results in a 5-fold increased efficiency in angiotensinogen processing. Renin is a highly specific endopeptidase, whose only known function is to generate angiotensin I from angiotensinogen in the plasma, initiating a cascade of reactions that produce an elevation of blood pressure and increased sodium retention by the kidney. The sequence is that of Renin (REN) from Macaca fascicularis (Crab-eating macaque).